We begin with the raw amino-acid sequence, 511 residues long: MESLKNNDERIENFLNELKNLQSNIDKDIKEFSNSPNTSNAEKDGKFLSKHDEELYNKQIIRLTQEDRISNLSSLINSNIEDSFLLAYQTILNNLPGVGPVFQMIFGIMGNGIDLEKFYKEIIAQVEKMIKKSLEDYFKNQCNIIFNNLGKACDQHKELTQKWYDNHGIRSMNHLGEEIPQSSSTIESDETLTPMIHASYLDLKMKFNDALTYFTDSKYRGHVAPLLTYTSVMYFAFLRDILKYGKEMKFDNSIIDGTANTPGIKKISNDFVNKSLSEFLKSGVEYTKVVNSLQEGEWQTYPPPIGRVWVPPVPIEWVSPPATSLALKFFLANTDNYPKGGKVVKVTNGYYELSPIKMTYALEVYYSSGHGYSVNYYPSYRFGGKPILPLIAPVVNTLFTMLNPNRFSRTFKIRITHKIVREAKWNLDFFDNEVGEAGSFNQKFVFTSTTSHINPICDKSETAGVTEIPGPFTTDKKYIRLTCIRKFNLQEPKNEGYAYGSSIFSVELIDL.

The protein to D.discoideum protein M3R.

In Dictyostelium discoideum (Social amoeba), this protein is cAMP-regulated M3L protein (prtA).